The primary structure comprises 261 residues: Putative ankyrin repeat protein L99 (261 aa).

ANK repeat units lie at residues 21–50, 51–80, 81–110, 112–140, 142–170, 171–203, and 231–259; these read KVNPLFMDSIESDNVKEVVKFLNQGVDVHA, HEDYALKYSSFKCNLELVKVLISHGANIHS, DRDLALHYAAQQGCFEVVKYLIKNGANVNA, QNSALIRACDSHHYEMIKYLIDKGANIHA, NNFCLRNSVLHHKWEIFTYLMNNGADINA, DNGAALFIAASDNDISAIIMLNAYNADMCIDNC, and NELKALTYAYNNNQYHVFDYLLSKSNINS.

In Acanthamoeba polyphaga (Amoeba), this protein is Putative ankyrin repeat protein L99.